We begin with the raw amino-acid sequence, 206 residues long: Bacterial microcompartment protein trimer-3 (206 aa).

2 BMC circularly permuted domains span residues 2–104 (ELRA…RLAP) and 105–206 (RVVS…DNRG). The Pore gating residues motif lies at 67-68 (ER).

Belongs to the EutL/PduB family. In terms of assembly, homotrimerizes to form a pseudohexamer. These stack, with the concave faces together, with the concave faces together, in purified bacterial microcompartments (BMC).

Its subcellular location is the bacterial microcompartment. A minor component of the bacterial microcompartment (BMC) shell. Expression of 5 proteins in E.coli (BMC-H (Hoch_5815), BMC-P (Hoch_5814), and 3 BMC-T (Hoch_5812, Hoch_5816, Hoch_3341)) forms 40 nm artificial BMCs with a molecular mass of 6.5 MDa. One of 2 stacked pseudohexamers in the BMC. There are 20 BMC-T pseudohexamers per BMC, composed of mixed BMC-T1, BMC-T2 and BMC-T3. The shell facets are 20-30 Angstroms thick, with 1 of the stacked BMC-T trimers protruding to the exterior. The stacked trimers may serve as conduits to allow metabolite flux across the protein shell, gated by Arg-68 which contacts Glu-67 in an adjacent subunit; they are flexible enough to play a role in accommodating variations in shell assembly. The sequence is that of Bacterial microcompartment protein trimer-3 from Haliangium ochraceum (strain DSM 14365 / JCM 11303 / SMP-2).